We begin with the raw amino-acid sequence, 468 residues long: Putative FBD-associated F-box protein At5g22720 (468 aa).

Residues 22–68 (EDLISQLPDSLITQILFYLQTKKAVTTSVLSKRWRSLWLSTPGLVLI) enclose the F-box domain. The FBD domain maps to 375 to 433 (ELRLSFVPRCLLSSLEFVEIKGCSRSNMERVKYVGEPIETKLARYFVENSTILKKLVLP).

The sequence is that of Putative FBD-associated F-box protein At5g22720 from Arabidopsis thaliana (Mouse-ear cress).